Consider the following 549-residue polypeptide: Hydroxylamine reductase (549 aa).

Residues C3, C6, C15, and C21 each coordinate [4Fe-4S] cluster. Hybrid [4Fe-2O-2S] cluster-binding residues include H248, E272, C316, C403, C431, C456, E490, and K492. C403 bears the Cysteine persulfide mark.

This sequence belongs to the HCP family. Requires [4Fe-4S] cluster as cofactor. Hybrid [4Fe-2O-2S] cluster is required as a cofactor.

Its subcellular location is the cytoplasm. The catalysed reaction is A + NH4(+) + H2O = hydroxylamine + AH2 + H(+). Catalyzes the reduction of hydroxylamine to form NH(3) and H(2)O. This Rhodospirillum rubrum (strain ATCC 11170 / ATH 1.1.1 / DSM 467 / LMG 4362 / NCIMB 8255 / S1) protein is Hydroxylamine reductase.